The sequence spans 83 residues: Apolipoprotein C-I (83 aa).

Positions 1–26 (MRLILSLPVLAVVLAMVLEGPAPAQA) are cleaved as a signal peptide.

This sequence belongs to the apolipoprotein C1 family.

It localises to the secreted. Inhibitor of lipoprotein binding to the low density lipoprotein (LDL) receptor, LDL receptor-related protein, and very low density lipoprotein (VLDL) receptor. Associates with high density lipoproteins (HDL) and the triacylglycerol-rich lipoproteins in the plasma and makes up about 10% of the protein of the VLDL and 2% of that of HDL. Appears to interfere directly with fatty acid uptake and is also the major plasma inhibitor of cholesteryl ester transfer protein (CETP). Binds free fatty acids and reduces their intracellular esterification. Modulates the interaction of APOE with beta-migrating VLDL and inhibits binding of beta-VLDL to the LDL receptor-related protein. This is Apolipoprotein C-I (APOC1) from Rousettus aegyptiacus (Egyptian fruit bat).